The chain runs to 652 residues: Potassium voltage-gated channel subfamily KQT member 1 (652 aa).

The Cytoplasmic portion of the chain corresponds to 1 to 110 (MSSEQPAWTF…YNFLERPTGW (110 aa)). The chain crosses the membrane as a helical span at residues 111 to 132 (KCFVYHFTVFLIVLICLIFSVL). The Extracellular segment spans residues 133 to 143 (STIQQYNNLAT). Residues 144-166 (ETLFWMEIVLVVFFGAEYVVRLW) traverse the membrane as a helical segment. The Cytoplasmic portion of the chain corresponds to 167 to 182 (SAGCRSKYVGVWGRLR). A helical membrane pass occupies residues 183–208 (FARKPISVIDLIVVVASVIVLCVGSN). The Extracellular segment spans residues 209-216 (GQVFATSA). Residues 217-232 (IRGIRFLQILRMLHVD) traverse the membrane as a helical; Voltage-sensor segment. The interaction with KCNE3 stretch occupies residues 228–236 (MLHVDRQGG). The Cytoplasmic portion of the chain corresponds to 233–250 (RQGGTWRLLGSVVFIHRQ). Residue Gln-234 coordinates a 1,2-diacyl-sn-glycero-3-phospho-(1D-myo-inositol-4,5-bisphosphate). The helical transmembrane segment at 251-273 (ELITTLYIGFLGLIFSSYFVYLA) threads the bilayer. The Extracellular segment spans residues 274–289 (EKDAIDSSGEYQFGSY). Positions 290-310 (ADALWWGVVTVTTIGYGDKVP) form an intramembrane region, pore-forming. Residues 311–312 (QT) lie on the Extracellular side of the membrane. Residues 313-338 (WIGKTIASCFSVFAISFFALPAGILG) traverse the membrane as a helical segment. The Cytoplasmic portion of the chain corresponds to 339-652 (SGFALKVQQK…VPRMTQDNIS (314 aa)). Positions 360–372 (AAASLIQTAWRCY) are interaction with CALM. A disordered region spans residues 393–419 (HHLMSPSPKPKKSAMVKKKKIRTERDE). The span at 401–414 (KPKKSAMVKKKKIR) shows a compositional bias: basic residues. The segment at 504–518 (KVIRRMQYFVAKKKF) is interaction with CALM; calcium-dependent. The interval 524 to 561 (PYDVRDVIEQYSQGHLNLMVRIKELQRRLDQSLGKPSL) is interaction with KCNE1 C-terminus. The interval 577–605 (IGSRLNRVEDKVTQMDHKLNLITDMLHHL) is interaction with AKAP9. Residues 578–609 (GSRLNRVEDKVTQMDHKLNLITDMLHHLLTNQ) are C-terminal assembly domain (tetramerization). The segment at 609–652 (QQGSQSIRTPHRSNSLNSENHPSRNTLPTYEQLNVPRMTQDNIS) is disordered.

The protein belongs to the potassium channel family. KQT (TC 1.A.1.15) subfamily. Kv7.1/KCNQ1 sub-subfamily. Tetramer. Heterotetramer with KCNE1; targets to the membrane raft. Interacts (via C-terminus) with CALM; forms a heterotetramer in a calcium-independent manner. Interacts with KCNE2; form a heterooligomer complex that targets to the membrane raft and leading to currents with an apparently instantaneous activation, a rapid deactivation process and a linear current-voltage relationship and decreases the amplitude of the outward current. Interacts with KCNE3; four KCNE3 molecules are bound to one KCNQ1 tetramer (4:4 KCNQ1:KCNE3 stoichiometry); alters membrane raft localization; affects KCNQ1 structure and gating properties. Interacts with KCNE4; impairs KCNQ1 localization in lipid rafts and inhibits voltage-gated potassium channel activity. Interacts with KCNE5; impairs KCNQ1 localization in lipid rafts and only conducts current upon strong and continued depolarization.

Its subcellular location is the cell membrane. The protein resides in the cytoplasmic vesicle membrane. It localises to the membrane raft. It is found in the endoplasmic reticulum. The protein localises to the basolateral cell membrane. It catalyses the reaction K(+)(in) = K(+)(out). Its activity is regulated as follows. PIP2 molecule is essential to activate KCNQ channels by inducing the coupling of the voltage-sensing domain (VSD) and the pore-forming domain (PD). Upon channel activation, PIP2 disrupts the VSD-calmodulin/CALM interactions, causing the release of CALM from the VSD which triggers the opening of the gate. Calcium potentiates KCNQ1 channel current through calcium-bound CALM. Calcium-bound CALM competes with PIP2 to stabilize the channel open state. Functionally, pore-forming subunit of the voltage-gated potassium (Kv) channel involved in the regulation of cardiomyocyte excitability and important in normal development and functions of myocardium, inner ear, stomach and colon. Associates with KCNE beta subunits that modulates current kinetics. Induces a voltage-dependent by rapidly activating and slowly deactivating potassium-selective outward current. Also promotes a delayed voltage activated potassium current showing outward rectification characteristic. During beta-adrenergic receptor stimulation participates in cardiac repolarization by associating with KCNE1 to form the I(Ks) cardiac potassium current that increases the amplitude and slows down the activation kinetics of outward potassium current I(Ks). When associated with KCNE3, forms the potassium channel that is important for cyclic AMP-stimulated intestinal secretion of chloride ions. When associated with KCNE2, forms a heterooligomer complex leading to currents with an apparently instantaneous activation, a rapid deactivation process and a linear current-voltage relationship and decreases the amplitude of the outward current. When associated with KCNE4, inhibits voltage-gated potassium channel activity. When associated with KCNE5, this complex only conducts current upon strong and continued depolarization. This chain is Potassium voltage-gated channel subfamily KQT member 1, found in Xenopus laevis (African clawed frog).